Here is a 482-residue protein sequence, read N- to C-terminus: Sugar transporter ERD6-like 16 (482 aa).

12 consecutive transmembrane segments (helical) span residues 42 to 62 (LMVL…GSCV), 80 to 100 (LAEF…GAVM), 117 to 137 (SACF…ALLL), 142 to 162 (FFTG…IAEI), 173 to 193 (TLNQ…GSLI), 197 to 217 (TLAL…CFIP), 280 to 300 (VIIG…GIGF), 316 to 336 (LGTI…TILI), 344 to 364 (LIMI…TSFL), 382 to 402 (GVLI…WVIM), 413 to 433 (IAGS…SYTF), and 443 to 463 (GTFY…AKMV).

It belongs to the major facilitator superfamily. Sugar transporter (TC 2.A.1.1) family.

The protein resides in the membrane. Sugar transporter. This is Sugar transporter ERD6-like 16 from Arabidopsis thaliana (Mouse-ear cress).